The following is a 213-amino-acid chain: MIARLVGFLVEKNSDSAVIDVNGVGYLVQLSGRALDYFSEIEGEITVHIETQIREDSITLFGFASYLERDWFRLLTSVQGVGGKAALAILTALTCDAISVAISSGDKTMICRANGIGPKIAQRIINELKEKPAAIALFSSAKGDHLAVEDISQPAASAHHAGNFMADAVSALLNLGFKPAEAQRVVQLASEELGDQATLDSLVRLALRLSSKH.

The tract at residues 1–64 (MIARLVGFLV…EDSITLFGFA (64 aa)) is domain I. The tract at residues 65–143 (SYLERDWFRL…AIALFSSAKG (79 aa)) is domain II. A flexible linker region spans residues 144–159 (DHLAVEDISQPAASAH). The interval 160–213 (HAGNFMADAVSALLNLGFKPAEAQRVVQLASEELGDQATLDSLVRLALRLSSKH) is domain III.

The protein belongs to the RuvA family. Homotetramer. Forms an RuvA(8)-RuvB(12)-Holliday junction (HJ) complex. HJ DNA is sandwiched between 2 RuvA tetramers; dsDNA enters through RuvA and exits via RuvB. An RuvB hexamer assembles on each DNA strand where it exits the tetramer. Each RuvB hexamer is contacted by two RuvA subunits (via domain III) on 2 adjacent RuvB subunits; this complex drives branch migration. In the full resolvosome a probable DNA-RuvA(4)-RuvB(12)-RuvC(2) complex forms which resolves the HJ.

It localises to the cytoplasm. The RuvA-RuvB-RuvC complex processes Holliday junction (HJ) DNA during genetic recombination and DNA repair, while the RuvA-RuvB complex plays an important role in the rescue of blocked DNA replication forks via replication fork reversal (RFR). RuvA specifically binds to HJ cruciform DNA, conferring on it an open structure. The RuvB hexamer acts as an ATP-dependent pump, pulling dsDNA into and through the RuvAB complex. HJ branch migration allows RuvC to scan DNA until it finds its consensus sequence, where it cleaves and resolves the cruciform DNA. The polypeptide is Holliday junction branch migration complex subunit RuvA (Zymomonas mobilis subsp. mobilis (strain ATCC 31821 / ZM4 / CP4)).